The primary structure comprises 66 residues: Large ribosomal subunit protein bL33c (66 aa).

The protein belongs to the bacterial ribosomal protein bL33 family.

Its subcellular location is the plastid. It is found in the chloroplast. The chain is Large ribosomal subunit protein bL33c from Jasminum nudiflorum (Winter jasmine).